A 920-amino-acid chain; its full sequence is Vacuolar membrane protease (920 aa).

The Cytoplasmic segment spans residues 1–20 (MASSRAQRFNPIAFTPWPVT). Residues 21–41 (CITTIVYLALLIPILVINLVV) traverse the membrane as a helical segment. Over 42–378 (PSAPETNPKG…AFAVFRLHTL (337 aa)) the chain is Vacuolar. N-linked (GlcNAc...) asparagine glycosylation is found at Asn-53, Asn-116, and Asn-119. 2 residues coordinate Zn(2+): His-175 and Asp-187. Glu-221 serves as the catalytic Proton acceptor. Glu-222 provides a ligand contact to Zn(2+). An N-linked (GlcNAc...) asparagine glycan is attached at Asn-238. Positions 247 and 306 each coordinate Zn(2+). Residues 379–399 (FAISVALLVIAPLVIFITSVI) form a helical membrane-spanning segment. The Cytoplasmic segment spans residues 400 to 433 (LSKTDRMYLFSMSKSLEGTGDQVSLRGLRGFSRT). The chain crosses the membrane as a helical span at residues 434-454 (PIILVIATTIPICLAYLLEKV). At 455 to 463 (NPYIVHSSQ) the chain is on the vacuolar side. The chain crosses the membrane as a helical span at residues 464 to 484 (FSVWSMMFSAWIFLAWFLACA). Topologically, residues 485–495 (ADFFRPSALHR) are cytoplasmic. The chain crosses the membrane as a helical span at residues 496-516 (AYSYTWIFVATWIMLVINTVY). Residues 517 to 520 (ANQK) are Vacuolar-facing. A helical membrane pass occupies residues 521–541 (GIAAGYFLLFYFAGAFLATWI). The Cytoplasmic portion of the chain corresponds to 542-659 (SYLELFALPR…TLPRWTWVLQ (118 aa)). The interval 556–605 (ARQTTGRRPSSLSSRLLTSSADELRSNASPSTAEFPGAAGEDTDPTESTS) is disordered. Positions 559 to 575 (TTGRRPSSLSSRLLTSS) are enriched in low complexity. The chain crosses the membrane as a helical span at residues 660-680 (LLLLAPIVLILVGQLALFLTA). Residues 681–693 (SMCQVGSDGVSTF) lie on the Vacuolar side of the membrane. The helical transmembrane segment at 694-714 (VVYLACAVFTTLLCIPLFPLI) threads the bilayer. Residues 715 to 720 (HRFTYH) are Cytoplasmic-facing. Residues 721 to 741 (IPTFLFLVFIGTLIYNLVAFP) form a helical membrane-spanning segment. Over 742–920 (FSPANRLKTF…VEASHSFTIQ (179 aa)) the chain is Vacuolar. N-linked (GlcNAc...) asparagine glycosylation is found at Asn-760, Asn-788, and Asn-832.

The protein belongs to the peptidase M28 family. Zn(2+) is required as a cofactor.

It localises to the vacuole membrane. Its function is as follows. May be involved in vacuolar sorting and osmoregulation. The polypeptide is Vacuolar membrane protease (Ajellomyces capsulatus (strain H143) (Darling's disease fungus)).